The sequence spans 496 residues: L-carnitine dehydrogenase/betainyl-CoA thioesterase (496 aa).

An L-carnitine dehydrogenase region spans residues 1 to 335 (MTTITKAACI…KRLWEKGGSP (335 aa)). Residue 11 to 16 (GGGVIG) coordinates NAD(+). Positions 336–496 (SKSLDASGPL…GAGRHVGQKR (161 aa)) are betainyl-CoA thioesterase.

The protein in the N-terminal section; belongs to the 3-hydroxyacyl-CoA dehydrogenase family. L-carnitine dehydrogenase subfamily. This sequence in the C-terminal section; belongs to the betainyl-CoA thioesterase family. Homodimer.

It is found in the cytoplasm. It catalyses the reaction carnitine + NAD(+) = 3-dehydrocarnitine + NADH + H(+). The enzyme catalyses N,N,N-trimethylglycyl-CoA + H2O = glycine betaine + CoA + H(+). Its pathway is amine and polyamine metabolism; carnitine metabolism. Its function is as follows. Multifunctional enzyme that catalyzes the NAD(+)-dependent oxidation of L-carnitine to 3-dehydrocarnitine and the cleavage of betainyl-CoA (N,N,N-trimethylglycyl-CoA) into glycine betaine and coenzyme A. Can also hydrolyze L-carnitinyl-CoA, but with much lower efficiency. Is involved in a L-carnitine degradation pathway that allows R.meliloti to grow on L-carnitine as the sole source of carbon and nitrogen. The sequence is that of L-carnitine dehydrogenase/betainyl-CoA thioesterase from Rhizobium meliloti (strain 1021) (Ensifer meliloti).